The primary structure comprises 331 residues: Ribosomal large subunit pseudouridine synthase D (331 aa).

The S4 RNA-binding domain occupies 25–97 (RRFDAVLAEL…IPLDILYEDE (73 aa)). Asp145 is a catalytic residue.

This sequence belongs to the pseudouridine synthase RluA family.

The protein localises to the cytoplasm. It catalyses the reaction uridine(1911/1915/1917) in 23S rRNA = pseudouridine(1911/1915/1917) in 23S rRNA. Its function is as follows. Responsible for synthesis of pseudouridine from uracil at positions 1911, 1915 and 1917 in 23S ribosomal RNA. The chain is Ribosomal large subunit pseudouridine synthase D (rluD) from Xylella fastidiosa (strain Temecula1 / ATCC 700964).